A 109-amino-acid chain; its full sequence is Cell division protein ZapA (109 aa).

Positions 21–100 form a coiled coil; it reads PDQRDALNQA…EQALLERGRI (80 aa).

The protein belongs to the ZapA family. Type 1 subfamily. In terms of assembly, homodimer. Interacts with FtsZ.

The protein resides in the cytoplasm. Functionally, activator of cell division through the inhibition of FtsZ GTPase activity, therefore promoting FtsZ assembly into bundles of protofilaments necessary for the formation of the division Z ring. It is recruited early at mid-cell but it is not essential for cell division. The sequence is that of Cell division protein ZapA from Shigella dysenteriae serotype 1 (strain Sd197).